Here is a 454-residue protein sequence, read N- to C-terminus: tRNA modification GTPase MnmE (454 aa).

The (6S)-5-formyl-5,6,7,8-tetrahydrofolate site is built by R23, E80, and K120. In terms of domain architecture, TrmE-type G spans G216–G377. N226 provides a ligand contact to K(+). Residues N226–S231, T245–T251, D270–G273, N335–D338, and S358–R360 each bind GTP. S230 lines the Mg(2+) pocket. Residues T245, I247, and T250 each contribute to the K(+) site. Residue T251 participates in Mg(2+) binding. K454 provides a ligand contact to (6S)-5-formyl-5,6,7,8-tetrahydrofolate.

Belongs to the TRAFAC class TrmE-Era-EngA-EngB-Septin-like GTPase superfamily. TrmE GTPase family. As to quaternary structure, homodimer. Heterotetramer of two MnmE and two MnmG subunits. It depends on K(+) as a cofactor.

It is found in the cytoplasm. Functionally, exhibits a very high intrinsic GTPase hydrolysis rate. Involved in the addition of a carboxymethylaminomethyl (cmnm) group at the wobble position (U34) of certain tRNAs, forming tRNA-cmnm(5)s(2)U34. The sequence is that of tRNA modification GTPase MnmE from Klebsiella pneumoniae (strain 342).